The following is a 447-amino-acid chain: GTPase Der (447 aa).

EngA-type G domains follow at residues 4-165 and 180-357; these read QIIT…PEEE and LQIV…KIWN. GTP contacts are provided by residues 10–17, 57–61, 119–122, 186–193, 233–237, and 298–301; these read GRPNVGKS, DTPGL, NKCE, GRPNAGKS, DTAGL, and NKWD. Residues 358 to 443 form the KH-like domain; the sequence is KKITTSKLNE…PIRFIYVKTK (86 aa).

This sequence belongs to the TRAFAC class TrmE-Era-EngA-EngB-Septin-like GTPase superfamily. EngA (Der) GTPase family. In terms of assembly, associates with the 50S ribosomal subunit.

Functionally, GTPase that plays an essential role in the late steps of ribosome biogenesis. The polypeptide is GTPase Der (Rickettsia peacockii (strain Rustic)).